A 239-amino-acid chain; its full sequence is MGRKWNNIKEKKASKDASTSRIYAKFGREIYVAAKQGEPNPESNQALRFVLERAKTYSVPKHIVDRAIEKAKGGAEENFDELRYEGFGPNGSMVIVDALTNNVNRTASDVRAAFGKNGGNMGVSGSVAYMFDQTAVIGVEGKSEEETLELLMEADVDVRDIMEEDETVIVYAEPDQFHQVQEAFKQAGVEEFTVAEITMLPQNEVTLDDESKEQFEKLIDVLEELEDVQQVYHNVDLGE.

This sequence belongs to the TACO1 family. YeeN subfamily.

It localises to the cytoplasm. The protein is Probable transcriptional regulatory protein BPUM_0743 of Bacillus pumilus (strain SAFR-032).